We begin with the raw amino-acid sequence, 163 residues long: Neurotrophin-3 (163 aa).

The N-terminal stretch at 1–3 (IQS) is a signal peptide. The propeptide occupies 4-119 (TSMDQGILTE…VLNRTSRRKR (116 aa)). Asn-112 carries N-linked (GlcNAc...) asparagine glycosylation. The interval 112 to 132 (NRTSRRKREGKSHRGEYSVCD) is disordered. Basic and acidic residues predominate over residues 123-132 (SHRGEYSVCD).

It belongs to the NGF-beta family.

It is found in the secreted. Seems to promote the survival of visceral and proprioceptive sensory neurons. The polypeptide is Neurotrophin-3 (NTF3) (Exiliboa placata (Oaxacan dwarf boa)).